The chain runs to 366 residues: Phosphate acyltransferase (366 aa).

Positions Glu334–Leu366 are disordered. Polar residues predominate over residues Ser343–Leu366.

The protein belongs to the PlsX family. Homodimer. Probably interacts with PlsY.

The protein resides in the cytoplasm. It carries out the reaction a fatty acyl-[ACP] + phosphate = an acyl phosphate + holo-[ACP]. The protein operates within lipid metabolism; phospholipid metabolism. Functionally, catalyzes the reversible formation of acyl-phosphate (acyl-PO(4)) from acyl-[acyl-carrier-protein] (acyl-ACP). This enzyme utilizes acyl-ACP as fatty acyl donor, but not acyl-CoA. This is Phosphate acyltransferase from Onion yellows phytoplasma (strain OY-M).